Reading from the N-terminus, the 386-residue chain is Zinc finger protein 385A (386 aa).

The Matrin-type 1 zinc-finger motif lies at 74 to 98; that stretch reads ISCNICQIRFNSQSQAEAHYKGNRH. The segment at 90–193 is disordered; the sequence is EAHYKGNRHA…ASLPGGSKEE (104 aa). Residues 103 to 121 are compositionally biased toward basic and acidic residues; that stretch reads KGIEAAKTRGREPGVREPG. The necessary for binding to ITPR1, CEBPA and p53/TP53 mRNAs stretch occupies residues 145-351; it reads NGLGPAPGSP…AGSPLSLRPA (207 aa). The residue at position 185 (S185) is a Phosphoserine. The Matrin-type 2 zinc-finger motif lies at 201–225; sequence LYCALCKVAVNSLSQLEAHNKGTKH. T248 carries the post-translational modification Phosphothreonine. Residues 261-285 form a Matrin-type 3 zinc finger; it reads FHCEICNVKVNSEVQLKQHISSRRH. The segment at 279–309 is disordered; that stretch reads HISSRRHRDGVAGKPNPLLSRHKKSRGAGEL.

Interacts with ELAVL1; the interaction is indirect, mRNA-dependent and may regulate p53/TP53 expression. Interacts with p53/TP53; the interaction is direct and enhances p53/TP53 transactivation functions on cell-cycle arrest target genes, resulting in growth arrest. In terms of processing, ubiquitinated upon prolonged exposure to genotoxic stress, which leads to proteasomal degradation of ZNF385A and releases p53/TP53 from cell-cycle arrest target gene promoters. In terms of tissue distribution, expressed predominantly in the retina.

It localises to the cytoplasm. The protein resides in the nucleus. It is found in the nucleolus. The protein localises to the cell projection. Its subcellular location is the dendrite. Functionally, RNA-binding protein that affects the localization and the translation of a subset of mRNA. May play a role in adipogenesis through binding to the 3'-UTR of CEBPA mRNA and regulation of its translation. Targets ITPR1 mRNA to dendrites in Purkinje cells, and may regulate its activity-dependent translation. With ELAVL1, binds the 3'-UTR of p53/TP53 mRNAs to control their nuclear export induced by CDKN2A. Hence, may regulate p53/TP53 expression and mediate in part the CDKN2A anti-proliferative activity. May also bind CCNB1 mRNA. Alternatively, may also regulate p53/TP53 activity through direct protein-protein interaction. Interacts with p53/TP53 and promotes cell-cycle arrest over apoptosis enhancing preferentially the DNA binding and transactivation of p53/TP53 on cell-cycle arrest target genes over proapoptotic target genes. May also regulate the ubiquitination and stability of CDKN1A promoting DNA damage-induced cell cycle arrest. Also plays a role in megakaryocytes differentiation. This Homo sapiens (Human) protein is Zinc finger protein 385A (ZNF385A).